Reading from the N-terminus, the 242-residue chain is MTMKLVAAALCLSLLAAGLWVGLSLTAESIEEGKPGGEKPGGGKPGGSGRGCFLPPLPKEDVSLCRNLEVFYMEMGNISCKIVPKCNLYRQKITAWQAPIVKFHTALDGALYLLVMVDPDAPSRSNPVMKYWRHWLVSNITGADMKSGSIRGNVLSDYSPPTPPPETGLHRYQFFVYLQGDRDISLSVEEKADLGGWNLDKFLQQYGLRDPDTSTQFMTQFDEELSSEFGRINDDQEQFNQK.

The signal sequence occupies residues 1 to 26 (MTMKLVAAALCLSLLAAGLWVGLSLT). Positions 31–50 (EEGKPGGEKPGGGKPGGSGR) are disordered. A compositionally biased stretch (gly residues) spans 38–50 (EKPGGGKPGGSGR). 2 N-linked (GlcNAc...) asparagine glycosylation sites follow: asparagine 77 and asparagine 139. Positions 210 to 242 (DPDTSTQFMTQFDEELSSEFGRINDDQEQFNQK) are important for secretion.

Belongs to the phosphatidylethanolamine-binding protein family.

Its subcellular location is the secreted. In terms of biological role, promotes AKT phosphorylation, suggesting a possible role in the PI3K-AKT signaling pathway. The polypeptide is Phosphatidylethanolamine-binding protein 4 (Pebp4) (Mus musculus (Mouse)).